Reading from the N-terminus, the 335-residue chain is Phosphate acyltransferase (335 aa).

This sequence belongs to the PlsX family. In terms of assembly, homodimer. Probably interacts with PlsY.

The protein resides in the cytoplasm. The enzyme catalyses a fatty acyl-[ACP] + phosphate = an acyl phosphate + holo-[ACP]. The protein operates within lipid metabolism; phospholipid metabolism. Its function is as follows. Catalyzes the reversible formation of acyl-phosphate (acyl-PO(4)) from acyl-[acyl-carrier-protein] (acyl-ACP). This enzyme utilizes acyl-ACP as fatty acyl donor, but not acyl-CoA. In Streptococcus pyogenes serotype M1, this protein is Phosphate acyltransferase.